The chain runs to 411 residues: Phosphoglycerate kinase (411 aa).

The interval 1 to 24 (MTGLCPLHQPSPLDHPHSGGTPMQ) is disordered. Residues 41 to 43 (DYN), Arg-56, 79 to 82 (HFGR), Arg-139, and Arg-172 each bind substrate. ATP is bound by residues Lys-222, Gly-310, Glu-341, and 369–372 (GGDS).

Belongs to the phosphoglycerate kinase family. In terms of assembly, monomer.

Its subcellular location is the cytoplasm. It catalyses the reaction (2R)-3-phosphoglycerate + ATP = (2R)-3-phospho-glyceroyl phosphate + ADP. It functions in the pathway carbohydrate degradation; glycolysis; pyruvate from D-glyceraldehyde 3-phosphate: step 2/5. The polypeptide is Phosphoglycerate kinase (Deinococcus radiodurans (strain ATCC 13939 / DSM 20539 / JCM 16871 / CCUG 27074 / LMG 4051 / NBRC 15346 / NCIMB 9279 / VKM B-1422 / R1)).